A 326-amino-acid chain; its full sequence is Vitamin B12 import system permease protein BtuC (326 aa).

Helical transmembrane passes span 19 to 39 (LSVL…LWIL), 61 to 81 (LAVL…QALF), 88 to 108 (PGLL…VLLG), 112 to 132 (LPNW…TLIL), 146 to 166 (LLAG…AIYF), 184 to 204 (GGVD…LLWI), 240 to 260 (GWMV…GLVI), 274 to 294 (VLLP…DIVA), and 302 to 322 (ELPI…WLLL).

The protein belongs to the binding-protein-dependent transport system permease family. FecCD subfamily. The complex is composed of two ATP-binding proteins (BtuD), two transmembrane proteins (BtuC) and a solute-binding protein (BtuF).

It is found in the cell inner membrane. Functionally, part of the ABC transporter complex BtuCDF involved in vitamin B12 import. Involved in the translocation of the substrate across the membrane. This Escherichia coli O6:K15:H31 (strain 536 / UPEC) protein is Vitamin B12 import system permease protein BtuC.